Here is a 586-residue protein sequence, read N- to C-terminus: 2-succinyl-5-enolpyruvyl-6-hydroxy-3-cyclohexene-1-carboxylate synthase (586 aa).

The protein belongs to the TPP enzyme family. MenD subfamily. Homodimer. Requires Mg(2+) as cofactor. The cofactor is Mn(2+). Thiamine diphosphate serves as cofactor.

The enzyme catalyses isochorismate + 2-oxoglutarate + H(+) = 5-enolpyruvoyl-6-hydroxy-2-succinyl-cyclohex-3-ene-1-carboxylate + CO2. The protein operates within quinol/quinone metabolism; 1,4-dihydroxy-2-naphthoate biosynthesis; 1,4-dihydroxy-2-naphthoate from chorismate: step 2/7. It functions in the pathway quinol/quinone metabolism; menaquinone biosynthesis. In terms of biological role, catalyzes the thiamine diphosphate-dependent decarboxylation of 2-oxoglutarate and the subsequent addition of the resulting succinic semialdehyde-thiamine pyrophosphate anion to isochorismate to yield 2-succinyl-5-enolpyruvyl-6-hydroxy-3-cyclohexene-1-carboxylate (SEPHCHC). In Geobacillus thermodenitrificans (strain NG80-2), this protein is 2-succinyl-5-enolpyruvyl-6-hydroxy-3-cyclohexene-1-carboxylate synthase.